The following is a 193-amino-acid chain: RNA polymerase sigma-H factor (193 aa).

A Polymerase core binding motif is present at residues 49-62 (DVAQEAFIKAYRAL). The segment at residues 157–176 (YEDIATVMQCPVGTVRSRIF) is a DNA-binding region (H-T-H motif).

The protein belongs to the sigma-70 factor family. ECF subfamily.

Its function is as follows. Sigma factors are initiation factors that promote the attachment of RNA polymerase to specific initiation sites and are then released. This sigma factor regulates genes such as algD, involved in alginate biosynthesis. This Pseudomonas aeruginosa (strain ATCC 15692 / DSM 22644 / CIP 104116 / JCM 14847 / LMG 12228 / 1C / PRS 101 / PAO1) protein is RNA polymerase sigma-H factor (algU).